Here is a 1375-residue protein sequence, read N- to C-terminus: DNA-directed RNA polymerase subunit beta (1375 aa).

The protein belongs to the RNA polymerase beta chain family. As to quaternary structure, the RNAP catalytic core consists of 2 alpha, 1 beta, 1 beta' and 1 omega subunit. When a sigma factor is associated with the core the holoenzyme is formed, which can initiate transcription.

The catalysed reaction is RNA(n) + a ribonucleoside 5'-triphosphate = RNA(n+1) + diphosphate. Its function is as follows. DNA-dependent RNA polymerase catalyzes the transcription of DNA into RNA using the four ribonucleoside triphosphates as substrates. This is DNA-directed RNA polymerase subunit beta from Methylibium petroleiphilum (strain ATCC BAA-1232 / LMG 22953 / PM1).